A 550-amino-acid polypeptide reads, in one-letter code: Undecaprenyl phosphate-alpha-4-amino-4-deoxy-L-arabinose arabinosyl transferase 2 (550 aa).

11 helical membrane-spanning segments follow: residues 4–24 (LKPG…PLSF), 81–101 (FAVH…VYWL), 110–132 (WLGL…GTYA), 176–196 (FMTK…PWVI), 204–224 (VFIY…PWVI), 255–275 (APFW…LGLL), 288–308 (TQSG…FFSL), 313–333 (LPTY…RYAA), 348–368 (LLFG…WGLA), 381–401 (VLLG…TLRA), and 409–429 (AALC…QQVI).

It belongs to the glycosyltransferase 83 family.

It localises to the cell inner membrane. The catalysed reaction is 4-amino-4-deoxy-alpha-L-arabinopyranosyl di-trans,octa-cis-undecaprenyl phosphate + lipid IVA = lipid IIA + di-trans,octa-cis-undecaprenyl phosphate.. The protein operates within lipopolysaccharide metabolism; 4-amino-4-deoxy-beta-L-arabinose-lipid A biosynthesis. Catalyzes the transfer of the L-Ara4N moiety of the glycolipid undecaprenyl phosphate-alpha-L-Ara4N to lipid A. The modified arabinose is attached to lipid A and is required for resistance to polymyxin and cationic antimicrobial peptides. The chain is Undecaprenyl phosphate-alpha-4-amino-4-deoxy-L-arabinose arabinosyl transferase 2 from Sodalis glossinidius (strain morsitans).